An 884-amino-acid polypeptide reads, in one-letter code: Receptor-like protein 39 (884 aa).

The signal sequence occupies residues M1–S24. The Extracellular portion of the chain corresponds to F25 to K847. N59, N71, and N92 each carry an N-linked (GlcNAc...) asparagine glycan. 10 LRR repeats span residues F98 to M122, N124 to N146, L147 to L170, R171 to L196, H197 to K223, E225 to L245, T246 to L268, T269 to M292, F294 to S318, and L320 to L344. N-linked (GlcNAc...) asparagine glycosylation occurs at N146. N-linked (GlcNAc...) asparagine glycosylation is found at N190, N208, N244, and N267. N-linked (GlcNAc...) asparagine glycosylation is found at N304 and N313. One copy of the LRR 11; degenerate repeat lies at K345–S365. The N-linked (GlcNAc...) asparagine glycan is linked to N353. LRR repeat units follow at residues L366 to P391, S392 to T413, L414 to L438, R440 to N463, and S464 to V487. N-linked (GlcNAc...) asparagine glycosylation is present at N403. N463 carries N-linked (GlcNAc...) asparagine glycosylation. Residues N488 to S507 form an LRR 17; degenerate repeat. LRR repeat units lie at residues R508–P529, S530–D553, A554–C577, A579–L601, P602–S625, F628–N652, S702–L725, K726–L749, K750–L773, and F775–G798. N520 is a glycosylation site (N-linked (GlcNAc...) asparagine). N576 carries N-linked (GlcNAc...) asparagine glycosylation. N-linked (GlcNAc...) asparagine glycosylation occurs at N732. N780 carries N-linked (GlcNAc...) asparagine glycosylation. A helical membrane pass occupies residues G848–A868. At S869–H884 the chain is on the cytoplasmic side.

The protein belongs to the RLP family.

The protein localises to the cell membrane. This Arabidopsis thaliana (Mouse-ear cress) protein is Receptor-like protein 39.